The sequence spans 337 residues: GTP 3',8-cyclase (337 aa).

The Radical SAM core domain maps to 17-242; that stretch reads TFQREYYYLR…RQKDRTDGPA (226 aa). Arg-26 contacts GTP. Cys-33 and Cys-37 together coordinate [4Fe-4S] cluster. Tyr-39 contacts S-adenosyl-L-methionine. Cys-40 is a [4Fe-4S] cluster binding site. Arg-76 contacts GTP. Position 80 (Gly-80) interacts with S-adenosyl-L-methionine. Thr-107 is a binding site for GTP. Position 131 (Ser-131) interacts with S-adenosyl-L-methionine. Position 168 (Lys-168) interacts with GTP. Met-202 contacts S-adenosyl-L-methionine. [4Fe-4S] cluster-binding residues include Cys-265 and Cys-268. 270-272 lines the GTP pocket; it reads RLR. Residue Cys-282 participates in [4Fe-4S] cluster binding.

The protein belongs to the radical SAM superfamily. MoaA family. As to quaternary structure, monomer and homodimer. It depends on [4Fe-4S] cluster as a cofactor.

The catalysed reaction is GTP + AH2 + S-adenosyl-L-methionine = (8S)-3',8-cyclo-7,8-dihydroguanosine 5'-triphosphate + 5'-deoxyadenosine + L-methionine + A + H(+). It participates in cofactor biosynthesis; molybdopterin biosynthesis. Catalyzes the cyclization of GTP to (8S)-3',8-cyclo-7,8-dihydroguanosine 5'-triphosphate. The protein is GTP 3',8-cyclase of Mannheimia succiniciproducens (strain KCTC 0769BP / MBEL55E).